The sequence spans 189 residues: Peptidyl-tRNA hydrolase (189 aa).

A tRNA-binding site is contributed by Phe15. Catalysis depends on His20, which acts as the Proton acceptor. 3 residues coordinate tRNA: Tyr65, Asn67, and Asn113.

The protein belongs to the PTH family. As to quaternary structure, monomer.

The protein resides in the cytoplasm. It catalyses the reaction an N-acyl-L-alpha-aminoacyl-tRNA + H2O = an N-acyl-L-amino acid + a tRNA + H(+). Its function is as follows. Hydrolyzes ribosome-free peptidyl-tRNAs (with 1 or more amino acids incorporated), which drop off the ribosome during protein synthesis, or as a result of ribosome stalling. Catalyzes the release of premature peptidyl moieties from peptidyl-tRNA molecules trapped in stalled 50S ribosomal subunits, and thus maintains levels of free tRNAs and 50S ribosomes. The sequence is that of Peptidyl-tRNA hydrolase from Phytoplasma australiense.